A 1499-amino-acid polypeptide reads, in one-letter code: DNA-directed RNA polymerase subunit beta' (1499 aa).

Residues cysteine 67, cysteine 69, cysteine 82, and cysteine 85 each contribute to the Zn(2+) site. Aspartate 499, aspartate 501, and aspartate 503 together coordinate Mg(2+). Zn(2+) contacts are provided by cysteine 867, cysteine 943, cysteine 950, and cysteine 953.

Belongs to the RNA polymerase beta' chain family. The RNAP catalytic core consists of 2 alpha, 1 beta, 1 beta' and 1 omega subunit. When a sigma factor is associated with the core the holoenzyme is formed, which can initiate transcription. The cofactor is Mg(2+). Requires Zn(2+) as cofactor.

The catalysed reaction is RNA(n) + a ribonucleoside 5'-triphosphate = RNA(n+1) + diphosphate. In terms of biological role, DNA-dependent RNA polymerase catalyzes the transcription of DNA into RNA using the four ribonucleoside triphosphates as substrates. The polypeptide is DNA-directed RNA polymerase subunit beta' (Prosthecochloris aestuarii (strain DSM 271 / SK 413)).